A 396-amino-acid polypeptide reads, in one-letter code: Cysteine desulfurase (396 aa).

Pyridoxal 5'-phosphate is bound by residues 71–72 (GT), Asn148, Gln176, and 196–198 (SGH). The residue at position 199 (Lys199) is an N6-(pyridoxal phosphate)lysine. Thr231 serves as a coordination point for pyridoxal 5'-phosphate. Catalysis depends on Cys319, which acts as the Cysteine persulfide intermediate. Cys319 lines the [2Fe-2S] cluster pocket.

This sequence belongs to the class-V pyridoxal-phosphate-dependent aminotransferase family. NifS/IscS subfamily. Homodimer. Pyridoxal 5'-phosphate serves as cofactor.

It catalyses the reaction (sulfur carrier)-H + L-cysteine = (sulfur carrier)-SH + L-alanine. Functionally, catalyzes the removal of elemental sulfur atoms from cysteine to produce alanine. Seems to participate in the biosynthesis of the nitrogenase metalloclusters by providing the inorganic sulfur required for the Fe-S core formation. The protein is Cysteine desulfurase of Azotobacter chroococcum mcd 1.